The chain runs to 940 residues: Acetyl-coenzyme A synthetase (940 aa).

Residues 1–33 (MCCAIWSASRAPACSASQLSSSHAVRPSVVPDA) form the signal peptide. The interval 1–289 (MCCAIWSASR…VQRSVTRLTA (289 aa)) is unknown. Disordered stretches follow at residues 70-127 (TARA…RPRC), 157-202 (VAPP…ADSA), and 224-274 (ASSQ…QQTC). Composition is skewed to polar residues over residues 72–95 (RATT…TAAS) and 107–120 (SSIS…TSGS). Composition is skewed to low complexity over residues 184-202 (TAPP…ADSA) and 224-245 (ASSQ…SGRS). Polar residues predominate over residues 258 to 274 (SSPTVQRNQTTVHQQTC). The tract at residues 290-940 (MSNPSHAEVP…SVFEAIRASK (651 aa)) is acetyl-coenzyme A synthetase. CoA contacts are provided by residues 480 to 483 (RRGK) and Thr-599. ATP-binding positions include 675-677 (GEP), 699-704 (DTWWQT), Asp-796, and Arg-811. CoA is bound at residue Ser-819. Arg-822 is a binding site for ATP. Mg(2+) is bound by residues Val-833, His-835, and Val-838. Lys-906 bears the N6-acetyllysine mark.

The protein belongs to the ATP-dependent AMP-binding enzyme family. Mg(2+) serves as cofactor. In terms of processing, acetylated on Lys-906 by Pat in the presence of acetyl-CoA as an acetyl donor and ATP. Acetylation results in the inactivation of the enzyme. Deacetylation by the SIR2-homolog deacetylase CobB is required to activate the enzyme.

It catalyses the reaction acetate + ATP + CoA = acetyl-CoA + AMP + diphosphate. Its function is as follows. Catalyzes the conversion of acetate into acetyl-CoA (AcCoA), an essential intermediate at the junction of anabolic and catabolic pathways. AcsA undergoes a two-step reaction. In the first half reaction, AcsA combines acetate with ATP to form acetyl-adenylate (AcAMP) intermediate. In the second half reaction, it can then transfer the acetyl group from AcAMP to the sulfhydryl group of CoA, forming the product AcCoA. In Mycolicibacterium smegmatis (strain ATCC 700084 / mc(2)155) (Mycobacterium smegmatis), this protein is Acetyl-coenzyme A synthetase (acsA).